The chain runs to 782 residues: Hypersensitive to pore-forming toxin protein 40 (782 aa).

Residues 138 to 203 (ESEIVPGAMY…TLFVSDQFSI (66 aa)) form the Tudor; degenerate domain. Composition is skewed to polar residues over residues 332–346 (SVNP…SSSM) and 413–443 (FEST…STIQ). Disordered regions lie at residues 332–351 (SVNP…DCPY), 413–448 (FEST…NEED), 472–492 (IERP…NMSE), and 617–672 (VAQG…LEDP). Residues 617 to 634 (VAQGSNAPKTAPNDSVNS) are compositionally biased toward polar residues. Residues 638 to 662 (DDIHETDKRGNHCKSVTEDPKDNKD) are compositionally biased toward basic and acidic residues.

The protein localises to the cytoplasm. Its subcellular location is the perinuclear region. The sequence is that of Hypersensitive to pore-forming toxin protein 40 from Caenorhabditis elegans.